Consider the following 360-residue polypeptide: Glutamate 5-kinase (360 aa).

Lys7 lines the ATP pocket. Substrate contacts are provided by Ser47, Asp134, and Asn146. ATP-binding positions include 166–167 (TD) and 210–216 (TGGITTK). A PUA domain is found at 275–348 (VGQITLDEGA…LNKKENINSS (74 aa)).

It belongs to the glutamate 5-kinase family.

It is found in the cytoplasm. The enzyme catalyses L-glutamate + ATP = L-glutamyl 5-phosphate + ADP. The protein operates within amino-acid biosynthesis; L-proline biosynthesis; L-glutamate 5-semialdehyde from L-glutamate: step 1/2. Catalyzes the transfer of a phosphate group to glutamate to form L-glutamate 5-phosphate. This Prochlorococcus marinus subsp. pastoris (strain CCMP1986 / NIES-2087 / MED4) protein is Glutamate 5-kinase.